The primary structure comprises 428 residues: Dihydroorotase (428 aa).

Residues H59 and H61 each contribute to the Zn(2+) site. Residues 61–63 (HLR) and N93 each bind substrate. 3 residues coordinate Zn(2+): D151, H178, and H231. N277 is a binding site for substrate. Residue D304 participates in Zn(2+) binding. Residue D304 is part of the active site. Residues H308 and 322 to 323 (FG) each bind substrate.

It belongs to the metallo-dependent hydrolases superfamily. DHOase family. Class I DHOase subfamily. Zn(2+) serves as cofactor.

It catalyses the reaction (S)-dihydroorotate + H2O = N-carbamoyl-L-aspartate + H(+). The protein operates within pyrimidine metabolism; UMP biosynthesis via de novo pathway; (S)-dihydroorotate from bicarbonate: step 3/3. Functionally, catalyzes the reversible cyclization of carbamoyl aspartate to dihydroorotate. The chain is Dihydroorotase from Bacillus cereus (strain G9842).